The chain runs to 284 residues: Ribose-phosphate pyrophosphokinase (284 aa).

Residues 34–36 (DNE) and 92–93 (RQ) contribute to the ATP site. Mg(2+)-binding residues include histidine 125 and aspartate 163. Lysine 186 is an active-site residue. Residues arginine 188, aspartate 212, and 216–220 (STGGT) each bind D-ribose 5-phosphate.

The protein belongs to the ribose-phosphate pyrophosphokinase family. Class III (archaeal) subfamily. As to quaternary structure, homotetramer. It depends on Mg(2+) as a cofactor.

The protein localises to the cytoplasm. The enzyme catalyses D-ribose 5-phosphate + ATP = 5-phospho-alpha-D-ribose 1-diphosphate + AMP + H(+). It functions in the pathway metabolic intermediate biosynthesis; 5-phospho-alpha-D-ribose 1-diphosphate biosynthesis; 5-phospho-alpha-D-ribose 1-diphosphate from D-ribose 5-phosphate (route I): step 1/1. With respect to regulation, activated by inorganic phosphate, with a maximal activity at 190 mM. Above this concentration inorganic phosphate progressively inhibits the kinase. Completely inhibited by ADP, and partially inhibited by alpha,beta-methylene ATP (mATP). Lack of allosteric regulation. Involved in the biosynthesis of the central metabolite phospho-alpha-D-ribosyl-1-pyrophosphate (PRPP) via the transfer of pyrophosphoryl group from ATP to 1-hydroxyl of ribose-5-phosphate (Rib-5-P). It can also use dATP as diphosphoryl donor. This chain is Ribose-phosphate pyrophosphokinase, found in Methanocaldococcus jannaschii (strain ATCC 43067 / DSM 2661 / JAL-1 / JCM 10045 / NBRC 100440) (Methanococcus jannaschii).